The sequence spans 301 residues: Transcription elongation factor A protein 1 (301 aa).

N-acetylmethionine is present on Met1. Positions 3–80 constitute a TFIIS N-terminal domain; the sequence is DEVIRIAKKM…KSWKKLLDGP (78 aa). Residue Lys55 forms a Glycyl lysine isopeptide (Lys-Gly) (interchain with G-Cter in ubiquitin) linkage. Phosphoserine is present on residues Ser57, Ser81, Ser97, and Ser100. Basic and acidic residues predominate over residues 76–93; that stretch reads LLDGPSTDKDSEEKKKDT. The interval 76-139 is disordered; sequence LLDGPSTDKD…FPRAPSTSDS (64 aa). One can recognise a TFIIS central domain in the interval 140–256; sequence VRLKCREMLA…EHQMAKTGGT (117 aa). The TFIIS-type zinc finger occupies 259 to 299; sequence DLFTCGKCKKKNCTYTQVQTRSADEPMTTFVVCNECGNRWK. The Zn(2+) site is built by Cys263, Cys266, Cys291, and Cys294.

Belongs to the TFS-II family. As to quaternary structure, interacts with EAF2. Associates with UBR5 and forms a transcription regulatory complex made of CDK9, Pol II, UBR5 and TCEA1/TFIIS. Part of TBP-based Pol II pre-initiation complex (PIC), in which Pol II core assembles with general transcription factors and other specific initiation factors including GTF2E1, GTF2E2, GTF2F1, GTF2F2, TCEA1, ERCC2, ERCC3, GTF2H2, GTF2H3, GTF2H4, GTF2H5, GTF2A1, GTF2A2, GTF2B and TBP; this large multi-subunit PIC complex mediates DNA unwinding and targets Pol II core to the transcription start site where the first phosphodiester bond forms.

Its subcellular location is the nucleus. Necessary for efficient RNA polymerase II transcription elongation past template-encoded arresting sites. The arresting sites in DNA have the property of trapping a certain fraction of elongating RNA polymerases that pass through, resulting in locked ternary complexes. Cleavage of the nascent transcript by S-II allows the resumption of elongation from the new 3'-terminus. The protein is Transcription elongation factor A protein 1 (TCEA1) of Bos taurus (Bovine).